The following is a 489-amino-acid chain: Mitochondrial distribution and morphology protein 34 (489 aa).

An SMP-LTD domain is found at 1–205; the sequence is MSFNINWDSI…LPSVLYKFSQ (205 aa).

The protein belongs to the MDM34 family. In terms of assembly, component of the ER-mitochondria encounter structure (ERMES) or MDM complex, composed of MMM1, MDM10, MDM12 and MDM34.

Its subcellular location is the mitochondrion outer membrane. Functionally, component of the ERMES/MDM complex, which serves as a molecular tether to connect the endoplasmic reticulum (ER) and mitochondria. Components of this complex are involved in the control of mitochondrial shape and protein biogenesis, and function in nonvesicular lipid trafficking between the ER and mitochondria. MDM34 is required for the interaction of the ER-resident membrane protein MMM1 and the outer mitochondrial membrane-resident beta-barrel protein MDM10. This chain is Mitochondrial distribution and morphology protein 34, found in Komagataella phaffii (strain GS115 / ATCC 20864) (Yeast).